We begin with the raw amino-acid sequence, 96 residues long: Conantokin-E (96 aa).

A signal peptide spans 1 to 24 (LLVPLVTFHLILGMGTLDHGGALT). Residues 25 to 72 (ERRSADATALKPEPVLLQKSDARSTDDNDKDRLTQMKRILKKRGNKAR) constitute a propeptide that is removed on maturation. Positions 28-57 (SADATALKPEPVLLQKSDARSTDDNDKDRL) are disordered. Over residues 44–57 (SDARSTDDNDKDRL) the composition is skewed to basic and acidic residues. Residues Glu75, Glu76, Glu82, Glu86, and Glu95 each carry the 4-carboxyglutamate modification. Residues Glu82 and Glu86 each contribute to the a divalent metal cation site. Cys83 and Cys96 form a disulfide bridge.

Belongs to the conotoxin B superfamily. As to expression, expressed by the venom duct.

The protein localises to the secreted. Conantokins inhibit N-methyl-D-aspartate (NMDA) receptors. This toxin has the highest potency for the NR2B/GRIN2B subunit, followed by NR2A/GRIN2A, NR2C/GRIN2C, and NR2D/GRIN2D subunits. The protein is Conantokin-E of Conus ermineus (Agate cone).